An 802-amino-acid polypeptide reads, in one-letter code: Leucine--tRNA ligase (802 aa).

The 'HIGH' region motif lies at proline 40–histidine 51. The 'KMSKS' region motif lies at lysine 576–serine 580. Lysine 579 is an ATP binding site.

It belongs to the class-I aminoacyl-tRNA synthetase family.

It localises to the cytoplasm. The catalysed reaction is tRNA(Leu) + L-leucine + ATP = L-leucyl-tRNA(Leu) + AMP + diphosphate. This chain is Leucine--tRNA ligase, found in Bacillus cereus (strain ATCC 10987 / NRS 248).